A 510-amino-acid polypeptide reads, in one-letter code: Zinc metalloproteinase (510 aa).

Positions 1–24 (MKSKLICIIMVIAFQAHFTMTVKA) are cleaved as a signal peptide. Residues 25-200 (DSVGEEKLQN…ILKKQNMLSE (176 aa)) constitute a propeptide that is removed on maturation. Residue His-349 participates in Zn(2+) binding. Residue Glu-350 is part of the active site. The Zn(2+) site is built by His-353 and Glu-373. The Proton donor role is filled by His-437.

The protein belongs to the peptidase M4 family. Requires Zn(2+) as cofactor.

The protein localises to the secreted. Probably linked to the pathogenesis of listerial infection. In Listeria monocytogenes serovar 1/2a (strain ATCC BAA-679 / EGD-e), this protein is Zinc metalloproteinase (mpl).